The following is a 176-amino-acid chain: Translation initiation factor IF-3 (176 aa).

This sequence belongs to the IF-3 family. As to quaternary structure, monomer.

It localises to the cytoplasm. In terms of biological role, IF-3 binds to the 30S ribosomal subunit and shifts the equilibrium between 70S ribosomes and their 50S and 30S subunits in favor of the free subunits, thus enhancing the availability of 30S subunits on which protein synthesis initiation begins. This Streptococcus mutans serotype c (strain ATCC 700610 / UA159) protein is Translation initiation factor IF-3.